A 303-amino-acid polypeptide reads, in one-letter code: Major fimbrium anchoring subunit FimB (303 aa).

A signal peptide spans Met1–Gly22. Cys23 is lipidated: N-palmitoyl cysteine. Residue Cys23 is the site of S-diacylglycerol cysteine attachment.

Belongs to the bacteroidetes fimbrillin superfamily. FimB/Mfa2 family. FimB is not part of the fimbrium itself, but anchors the fimbrium in the outer membrane. Linear, head-to-tail oligomerization of fimbrial subunits mediates assembly of the fimbrium stalk, while the minor components FimC, FimD and FimE probably form the fimbrium tip. The anchoring subunit FimB limits fimbrium length and is important for solid fimbrium attachment to the outer membrane. In its absence, the major fimbriae become very long and are easily detached from the membrane.

It localises to the cell outer membrane. Its function is as follows. Anchoring subunit of the major fimbriae. Regulates fimbrial length. These filamentous pili are attached to the cell surface; they mediate biofilm formation, adhesion onto host cells and onto other bacteria that are part of the oral microbiome. Fimbriae of P.gingivalis are major virulence factors. The protein is Major fimbrium anchoring subunit FimB of Porphyromonas gingivalis (strain ATCC 33277 / DSM 20709 / CIP 103683 / JCM 12257 / NCTC 11834 / 2561).